The following is a 429-amino-acid chain: MLDIKWIRANPDKLDESLSKRGIDSVSKSIIHIDSEKRTLISLIQKLQHERKEKSSSVAHIYDKSSTDFEEIQNDVKLINQKITELETSLLHHEKRLSEIMDNLPNLVADDVPYGTNSDMNKVLKECGTIQNIKFPKHHYEIGKNLGMMDFNTATKMSGSRFVILKHDLAKLERALINFMIDVHTTEFNFFEVSPPCLVKDHAMYNVGQLPKFADASFETTTGYRLIPTAEVPLTNIFANTTLLEEKLPIRLVAFTPCFRSEVGSAGKDVKGMLRMHQFGKVELFTIATPKESNREFEYLTAAAEKILEKLGLPYRVVLLCSGDIGFAAHKTYDLEVWLPAQNCYREISSCSHFSSFQARRSLSKYRELCSKKVNFLHTINGSGLAVGRTIIAILENYQNSDGSVTIPEKLRNYMGGQKLITPLTETVF.

229-231 (TAE) provides a ligand contact to L-serine. Position 260–262 (260–262 (RSE)) interacts with ATP. An L-serine-binding site is contributed by glutamate 283. 347–350 (EISS) lines the ATP pocket. Serine 383 contacts L-serine.

This sequence belongs to the class-II aminoacyl-tRNA synthetase family. Type-1 seryl-tRNA synthetase subfamily. Homodimer. The tRNA molecule binds across the dimer.

The protein resides in the cytoplasm. It carries out the reaction tRNA(Ser) + L-serine + ATP = L-seryl-tRNA(Ser) + AMP + diphosphate + H(+). The catalysed reaction is tRNA(Sec) + L-serine + ATP = L-seryl-tRNA(Sec) + AMP + diphosphate + H(+). Its pathway is aminoacyl-tRNA biosynthesis; selenocysteinyl-tRNA(Sec) biosynthesis; L-seryl-tRNA(Sec) from L-serine and tRNA(Sec): step 1/1. Its function is as follows. Catalyzes the attachment of serine to tRNA(Ser). Is also able to aminoacylate tRNA(Sec) with serine, to form the misacylated tRNA L-seryl-tRNA(Sec), which will be further converted into selenocysteinyl-tRNA(Sec). This is Serine--tRNA ligase from Orientia tsutsugamushi (strain Ikeda) (Rickettsia tsutsugamushi).